Consider the following 82-residue polypeptide: Large ribosomal subunit protein uL23 (82 aa).

The protein belongs to the universal ribosomal protein uL23 family. In terms of assembly, part of the 50S ribosomal subunit. Contacts protein L29.

Its function is as follows. Binds to 23S rRNA. One of the proteins that surrounds the polypeptide exit tunnel on the outside of the ribosome. The chain is Large ribosomal subunit protein uL23 from Picrophilus torridus (strain ATCC 700027 / DSM 9790 / JCM 10055 / NBRC 100828 / KAW 2/3).